Reading from the N-terminus, the 142-residue chain is Photosystem II extrinsic protein U (142 aa).

The first 29 residues, 1–29 (MKGLVRLLTVFSLLLGCWGWLGTTQIAQA), serve as a signal peptide directing secretion.

It belongs to the PsbU family. As to quaternary structure, PSII is composed of 1 copy each of membrane proteins PsbA, PsbB, PsbC, PsbD, PsbE, PsbF, PsbH, PsbI, PsbJ, PsbK, PsbL, PsbM, PsbT, PsbX, PsbY, PsbZ, Psb30/Ycf12, peripheral proteins PsbO, CyanoQ (PsbQ), PsbU, PsbV and a large number of cofactors. It forms dimeric complexes.

The protein localises to the cellular thylakoid membrane. Functionally, one of the extrinsic, lumenal subunits of photosystem II (PSII). PSII is a light-driven water plastoquinone oxidoreductase, using light energy to abstract electrons from H(2)O, generating a proton gradient subsequently used for ATP formation. The extrinsic proteins stabilize the structure of photosystem II oxygen-evolving complex (OEC), the ion environment of oxygen evolution and protect the OEC against heat-induced inactivation. The chain is Photosystem II extrinsic protein U from Trichormus variabilis (strain ATCC 29413 / PCC 7937) (Anabaena variabilis).